The sequence spans 280 residues: Fructose-1,6-bisphosphatase/inositol-1-monophosphatase (280 aa).

Positions 73, 94, 96, and 97 each coordinate Mg(2+). Residues 97-99 (DGT), arginine 195, valine 200, and arginine 219 contribute to the substrate site. Aspartate 226 serves as a coordination point for Mg(2+).

Belongs to the inositol monophosphatase superfamily. FBPase class 4 family. It depends on Mg(2+) as a cofactor.

The enzyme catalyses beta-D-fructose 1,6-bisphosphate + H2O = beta-D-fructose 6-phosphate + phosphate. It catalyses the reaction a myo-inositol phosphate + H2O = myo-inositol + phosphate. Phosphatase with broad specificity; it can dephosphorylate fructose 1,6-bisphosphate, and both D and L isomers of inositol-1-phosphate (I-1-P). This is Fructose-1,6-bisphosphatase/inositol-1-monophosphatase (suhB) from Methanothermobacter thermautotrophicus (strain ATCC 29096 / DSM 1053 / JCM 10044 / NBRC 100330 / Delta H) (Methanobacterium thermoautotrophicum).